The primary structure comprises 2115 residues: Nuclear mitotic apparatus protein 1 (2115 aa).

The head (Globular) stretch occupies residues Met1–Pro212. A Phosphoserine modification is found at Ser162. Phosphothreonine is present on Thr163. Phosphoserine is present on residues Ser169 and Ser203. Thr211 carries the post-translational modification Phosphothreonine. Residues Gln213–Lys1699 are a coiled coil. Ser271 carries the post-translational modification Phosphoserine. Lys379 is modified (N6-acetyllysine). Phosphoserine is present on residues Ser388 and Ser395. Low complexity predominate over residues Leu549–Leu560. Disordered regions lie at residues Leu549–Glu593 and Leu746–Gly766. Positions Lys561–His581 are enriched in basic and acidic residues. Position 820 is a phosphoserine (Ser820). At Lys891 the chain carries N6-acetyllysine. Basic and acidic residues-rich tracts occupy residues Ala926–Glu950 and Gln996–Arg1013. Disordered regions lie at residues Ala926–Arg958 and Leu988–Arg1013. Phosphothreonine; by PLK1 is present on Thr1047. Basic and acidic residues predominate over residues Leu1090–Ala1102. Disordered regions lie at residues Leu1090 to Ser1225 and Glu1275 to Ser1296. Low complexity-rich tracts occupy residues Ser1103 to Ala1112 and Glu1133 to Gln1142. The segment covering Ser1145 to Ala1163 has biased composition (basic and acidic residues). At Ser1187 the chain carries Phosphoserine. Positions Lys1198–Asn1224 are enriched in basic and acidic residues. Position 1225 is a phosphoserine (Ser1225). The span at Ala1283–Ser1296 shows a compositional bias: basic and acidic residues. N6-acetyllysine is present on Lys1511. Position 1601 is a phosphoserine (Ser1601). A Glycyl lysine isopeptide (Lys-Gly) (interchain with G-Cter in SUMO2) cross-link involves residue Lys1699. The segment at Lys1699–Tyr1876 is membrane-binding domain 1. The tract at residues Phe1700 to His2115 is tail (Globular). Phosphoserine is present on residues Ser1721, Ser1724, and Ser1728. The disordered stretch occupies residues Pro1734–Gln1761. Polar residues predominate over residues Leu1735 to Gly1748. Positions Pro1742 to Gly1748 match the Tankyrase-binding domain motif. A phosphoserine mark is found at Ser1757 and Ser1760. Lys1766 participates in a covalent cross-link: Glycyl lysine isopeptide (Lys-Gly) (interchain with G-Cter in SUMO1); alternate. Lys1766 is covalently cross-linked (Glycyl lysine isopeptide (Lys-Gly) (interchain with G-Cter in SUMO2); alternate). A phosphoserine; by PLK1 mark is found at Ser1769 and Ser1772. Tyr1774 is subject to Phosphotyrosine. Position 1776 is a phosphothreonine (Thr1776). Ser1788 is subject to Phosphoserine. The tract at residues Ser1788–Arg1810 is 4.1-binding domain. The residue at position 1789 (Ser1789) is a Phosphoserine; by PLK1. 2 positions are modified to phosphoserine: Ser1792 and Ser1800. Thr1804 bears the Phosphothreonine mark. Lys1822 is covalently cross-linked (Glycyl lysine isopeptide (Lys-Gly) (interchain with G-Cter in SUMO2)). 2 disordered regions span residues Glu1826–Ser1901 and Glu1955–His2115. A phosphoserine mark is found at Ser1830 and Ser1833. The span at Ser1830–Leu1857 shows a compositional bias: polar residues. Position 1834 is a phosphoserine; by PLK1 (Ser1834). Tyr1836 bears the Phosphotyrosine mark. Ser1840 bears the Phosphoserine mark. The residue at position 1844 (Ser1844) is a Phosphoserine; alternate. Ser1844 is a glycosylation site (O-linked (GlcNAc) serine; alternate). Ser1862 and Ser1887 each carry phosphoserine. A compositionally biased stretch (polar residues) spans Thr1879–Val1891. The segment at Ser1882–Gln1985 is tubulin-binding domain. The segment at Ser1892–Arg1926 is GPSM2-binding domain. The segment covering Glu1955–Arg1966 has biased composition (basic and acidic residues). A Phosphoserine modification is found at Ser1969. The tract at residues Ile1981 to Gly2060 is membrane-binding domain 2. The Nuclear localization signal motif lies at Arg1984 to Arg1989. Residue Ser1991 is modified to Phosphoserine. The residue at position 2000 (Thr2000) is a Phosphothreonine. The residue at position 2003 (Ser2003) is a Phosphoserine. Position 2015 is a phosphothreonine; by CDK1 (Thr2015). Residues Thr2015–Lys2032 are compositionally biased toward basic and acidic residues. Ser2047 carries the post-translational modification Phosphoserine. Residue Thr2055 is modified to Phosphothreonine; by CDK1. Residues Ser2062 and Ser2077 each carry the phosphoserine modification. Residue Ser2087 is modified to Phosphoserine; by CDK1. Low complexity predominate over residues Arg2089 to Arg2108. At Thr2106 the chain carries Phosphothreonine; by CDK1.

In terms of assembly, homodimer. Also forms multiarm oligomers by association of C-terminal tail domains, oligomers may further assemble to form a hexagonal nuclear lattice-like network. Associates with the dynein-dynactin complex; this association promotes the transport and accumulation of NUMA1 at the mitotic spindle poles that is inhibited by the BRISC complex in a PLK1-dependent manner. Part of a spindle orientation complex at least composed of GNAI1, GPSM2 and NUMA1. Interacts (via C-terminus) with microtubules (MTs); this interaction is direct and promotes both MT bundle formation and stability in a dynein-dynactin complex- and CDK1-independent manner. Interacts with EPB41 and EPB41L2; these interactions are negatively regulated by CDK1 during metaphase and are important for anaphase-specific localization of NUMA1 in symmetrically dividing cells. Interacts (via C-terminus) with GPSM2 (via TPR repeats); this interaction is direct, prevented by competitive binding of INSC, is inhibited in a PLK1-dependent manner, blocks the association of NUMA1 with MTs and inhibits NUMA1-induced MT bundle formation, prevents the association of NUMA1 with SPAG5, induces mitotic spindle pole localization of GPSM2, both metaphase cell cortex localization of NUMA1 and mitotic spindle organization. Does not interact with GPSM2 during anaphase. Interacts (via C-terminus) with the nuclear importin alpha/importin beta receptor; this interaction is inhibited by RanGTP. Interacts (via C-terminus) with KPNB1; this interaction is inhibited by RanGTP and the BRISC complex. Interacts with ABRAXAS2 and the BRISC complex; these interactions regulate mitotic spindle assembly. Interacts (via N-terminal end of the coiled-coil domain) with RAE1; this interaction promotes mitotic spindle formation. Interacts (via C-terminus) with SPAG5 (via C-terminus); this interaction promotes the recruitment of SPAG5 to the MTs at spindle poles in a dynein-dynactin-dependent manner and regulates mitotic spindle organization and proper chromosome alignment during mitosis. Interacts with TNKS; this interaction occurs at the onset of mitosis. Interacts with TNKS2. Interacts with tubulin. Interacts with KHDC3L (via C-terminus). In terms of processing, phosphorylation and dephosphorylation on Thr-2055 regulates the extent of cortical NUMA1 and the dynein-dynactin complex localization during mitotic metaphase and anaphase. In metaphase, phosphorylation on Thr-2055 occurs in a kinase CDK1-dependent manner; this phosphorylation maintains low levels of cortical dynein-dynactin complex at metaphase, and hence proper spindle positioning. In anaphase, dephosphorylated on Thr-2055 by phosphatase PPP2CA; this dephosphorylation stimulates its membrane association and with the dynein-dynactin complex its enrichment at the cell cortex, and hence robust spindle elongation. Probably also phosphorylated on Thr-2015 and Ser-2087 by CDK1; these phosphorylations may regulate its cell cortex recruitment during metaphase and anaphase. Phosphorylated on Thr-1047, Ser-1769, Ser-1772, Ser-1789 and Ser-1834 by PLK1; these phosphorylations induce cortical dynein-dynactin complex dissociation from the NUMA1-GPSM2 complex and negatively regulates cortical dynein-dynactin complex localization. Post-translationally, ADP-ribosylated by TNKS at the onset of mitosis; ADP-ribosylation is not required for its localization to spindle poles. O-glycosylated during cytokinesis at sites identical or close to phosphorylation sites, this interferes with the phosphorylation status. In terms of processing, ubiquitinated with 'Lys-63'-linked polyubiquitin chains. Deubiquitination by the BRISC complex is important for the incorporation of NUMA1 into mitotic spindle poles and normal spindle pole function, probably by modulating interactions between NUMA1, dynein-dynactin complex and importin-beta.

It is found in the nucleus. The protein resides in the nucleoplasm. Its subcellular location is the nucleus matrix. It localises to the chromosome. The protein localises to the cytoplasm. It is found in the cytoskeleton. The protein resides in the microtubule organizing center. Its subcellular location is the centrosome. It localises to the spindle pole. The protein localises to the cell cortex. It is found in the cell membrane. The protein resides in the lateral cell membrane. Its subcellular location is the cytosol. Functionally, microtubule (MT)-binding protein that plays a role in the formation and maintenance of the spindle poles and the alignement and the segregation of chromosomes during mitotic cell division. Functions to tether the minus ends of MTs at the spindle poles, which is critical for the establishment and maintenance of the spindle poles. Plays a role in the establishment of the mitotic spindle orientation during metaphase and elongation during anaphase in a dynein-dynactin-dependent manner. In metaphase, part of a ternary complex composed of GPSM2 and G(i) alpha proteins, that regulates the recruitment and anchorage of the dynein-dynactin complex in the mitotic cell cortex regions situated above the two spindle poles, and hence regulates the correct oritentation of the mitotic spindle. During anaphase, mediates the recruitment and accumulation of the dynein-dynactin complex at the cell membrane of the polar cortical region through direct association with phosphatidylinositol 4,5-bisphosphate (PI(4,5)P2), and hence participates in the regulation of the spindle elongation and chromosome segregation. Also binds to other polyanionic phosphoinositides, such as phosphatidylinositol 3-phosphate (PIP), lysophosphatidic acid (LPA) and phosphatidylinositol triphosphate (PIP3), in vitro. Also required for proper orientation of the mitotic spindle during asymmetric cell divisions. Plays a role in mitotic MT aster assembly. Involved in anastral spindle assembly. Positively regulates TNKS protein localization to spindle poles in mitosis. Highly abundant component of the nuclear matrix where it may serve a non-mitotic structural role, occupies the majority of the nuclear volume. Required for epidermal differentiation and hair follicle morphogenesis. This chain is Nuclear mitotic apparatus protein 1, found in Homo sapiens (Human).